Here is a 325-residue protein sequence, read N- to C-terminus: Ubiquitin thioesterase OTU1 (325 aa).

Residues 7–86 (RIRSKTGVEN…NVSSISSNPG (80 aa)) are UBX-like. The 124-residue stretch at 123 to 246 (ATRRVTDDDN…GIHYDALSIC (124 aa)) folds into the OTU domain. The tract at residues 128–134 (TDDDNSC) is cys-loop. Asp-131 is a catalytic residue. Cys-134 serves as the catalytic Nucleophile. The variable-loop stretch occupies residues 185–195 (IQNPKNWGGAI). The his-loop stretch occupies residues 235–239 (YDGIH). Residue Ile-238 coordinates substrate. Residue His-239 is part of the active site. Residues 265 to 270 (KDSLAK) form an S2 site region. The segment at 292-316 (LICLNCNKTLKGEKEAAIHASTTGH) adopts a C2H2-type zinc-finger fold. Residue His-316 is part of the active site.

The protein resides in the cytoplasm. It catalyses the reaction Thiol-dependent hydrolysis of ester, thioester, amide, peptide and isopeptide bonds formed by the C-terminal Gly of ubiquitin (a 76-residue protein attached to proteins as an intracellular targeting signal).. Its function is as follows. Hydrolase that can remove conjugated ubiquitin from proteins and may therefore play an important regulatory role at the level of protein turnover by preventing degradation. The chain is Ubiquitin thioesterase OTU1 (yod1) from Dictyostelium discoideum (Social amoeba).